A 418-amino-acid polypeptide reads, in one-letter code: Glutamyl-tRNA reductase (418 aa).

Residues 49–52 (TCNR), Ser-109, 114–116 (EPQ), and Gln-120 each bind substrate. Catalysis depends on Cys-50, which acts as the Nucleophile. Residue 189–194 (GAGETI) coordinates NADP(+).

The protein belongs to the glutamyl-tRNA reductase family. Homodimer.

The enzyme catalyses (S)-4-amino-5-oxopentanoate + tRNA(Glu) + NADP(+) = L-glutamyl-tRNA(Glu) + NADPH + H(+). It participates in porphyrin-containing compound metabolism; protoporphyrin-IX biosynthesis; 5-aminolevulinate from L-glutamyl-tRNA(Glu): step 1/2. In terms of biological role, catalyzes the NADPH-dependent reduction of glutamyl-tRNA(Glu) to glutamate 1-semialdehyde (GSA). The chain is Glutamyl-tRNA reductase from Shigella flexneri.